Here is a 103-residue protein sequence, read N- to C-terminus: Putative RNA-binding protein RbpB (103 aa).

The 78-residue stretch at 2 to 79 (SIYVGNLSYD…RDLKVNKAKP (78 aa)) folds into the RRM domain. The span at 74–85 (VNKAKPREDRGG) shows a compositional bias: basic and acidic residues. The interval 74–103 (VNKAKPREDRGGSRGSFGGNRSNNNFRNRY) is disordered. Residues 92-103 (GNRSNNNFRNRY) show a composition bias toward low complexity.

The polypeptide is Putative RNA-binding protein RbpB (rbpB) (Nostoc sp. (strain PCC 7120 / SAG 25.82 / UTEX 2576)).